Consider the following 345-residue polypeptide: D-erythrose-4-phosphate dehydrogenase (345 aa).

11 to 12 (RI) is an NAD(+) binding site. Residues 158 to 160 (SCT), Arg204, 217 to 218 (TK), and Arg240 contribute to the substrate site. Catalysis depends on Cys159, which acts as the Nucleophile. Asn322 is an NAD(+) binding site.

The protein belongs to the glyceraldehyde-3-phosphate dehydrogenase family. Epd subfamily. As to quaternary structure, homotetramer.

It localises to the cytoplasm. It catalyses the reaction D-erythrose 4-phosphate + NAD(+) + H2O = 4-phospho-D-erythronate + NADH + 2 H(+). It participates in cofactor biosynthesis; pyridoxine 5'-phosphate biosynthesis; pyridoxine 5'-phosphate from D-erythrose 4-phosphate: step 1/5. Functionally, catalyzes the NAD-dependent conversion of D-erythrose 4-phosphate to 4-phosphoerythronate. This is D-erythrose-4-phosphate dehydrogenase from Vibrio campbellii (strain ATCC BAA-1116).